The chain runs to 101 residues: NAD(P)H-quinone oxidoreductase subunit 4L, chloroplastic (101 aa).

3 consecutive transmembrane segments (helical) span residues 2–22 (MLEHVLVLSAYLFSIGIYGLI), 32–52 (MCLELILNAVNMNLVTFSDLF), and 61–81 (IFSIFVIAIAAAEAAIGPAIV).

This sequence belongs to the complex I subunit 4L family. NDH is composed of at least 16 different subunits, 5 of which are encoded in the nucleus.

Its subcellular location is the plastid. The protein resides in the chloroplast thylakoid membrane. The enzyme catalyses a plastoquinone + NADH + (n+1) H(+)(in) = a plastoquinol + NAD(+) + n H(+)(out). It catalyses the reaction a plastoquinone + NADPH + (n+1) H(+)(in) = a plastoquinol + NADP(+) + n H(+)(out). Functionally, NDH shuttles electrons from NAD(P)H:plastoquinone, via FMN and iron-sulfur (Fe-S) centers, to quinones in the photosynthetic chain and possibly in a chloroplast respiratory chain. The immediate electron acceptor for the enzyme in this species is believed to be plastoquinone. Couples the redox reaction to proton translocation, and thus conserves the redox energy in a proton gradient. This chain is NAD(P)H-quinone oxidoreductase subunit 4L, chloroplastic, found in Chloranthus spicatus (Chulantree).